A 793-amino-acid polypeptide reads, in one-letter code: Lon protease 1 (793 aa).

A Lon N-terminal domain is found at 8–202 (VPVIPLKNSV…KLLDRLQELK (195 aa)). 354–361 (GPPGVGKT) is an ATP binding site. In terms of domain architecture, Lon proteolytic spans 590-770 (LLPPGVVTGL…NEVLKITLGV (181 aa)). Catalysis depends on residues serine 676 and lysine 719.

The protein belongs to the peptidase S16 family. In terms of assembly, homohexamer. Organized in a ring with a central cavity.

It localises to the cytoplasm. The catalysed reaction is Hydrolysis of proteins in presence of ATP.. ATP-dependent serine protease that mediates the selective degradation of mutant and abnormal proteins as well as certain short-lived regulatory proteins. Required for cellular homeostasis and for survival from DNA damage and developmental changes induced by stress. Degrades polypeptides processively to yield small peptide fragments that are 5 to 10 amino acids long. Binds to DNA in a double-stranded, site-specific manner. This is Lon protease 1 from Bdellovibrio bacteriovorus (strain ATCC 15356 / DSM 50701 / NCIMB 9529 / HD100).